We begin with the raw amino-acid sequence, 100 residues long: Small ribosomal subunit protein uS14c (100 aa).

This sequence belongs to the universal ribosomal protein uS14 family. As to quaternary structure, part of the 30S ribosomal subunit.

Its subcellular location is the plastid. It is found in the chloroplast. In terms of biological role, binds 16S rRNA, required for the assembly of 30S particles. This is Small ribosomal subunit protein uS14c from Lepidium virginicum (Virginia pepperweed).